The chain runs to 316 residues: Melanocyte-stimulating hormone receptor (316 aa).

Over 1-37 (MPMQGAQRKLLGSLNSTPTATSNLGLAANHTGAPCLE) the chain is Extracellular. The N-linked (GlcNAc...) asparagine glycan is linked to N29. Residues 38-63 (VSIPDGLFLSLGLVSLVENVLVVAAI) form a helical membrane-spanning segment. Over 64–72 (AKNRNLHSS) the chain is Cytoplasmic. The helical transmembrane segment at 73–93 (MYCFICCLALSDLLVSGSNML) threads the bilayer. Residues 94–118 (ETAVILLLETGALATRTSVVQQLHN) lie on the Extracellular side of the membrane. The chain crosses the membrane as a helical span at residues 119-140 (TINVLTCSSMLCSLCFLGAIAV). Residues 141-163 (DRYISIFYALRYHSIMTLPRAQR) are Cytoplasmic-facing. A helical transmembrane segment spans residues 164–183 (AIAAIWVASVLSSTLFITYY). The Extracellular segment spans residues 184–191 (DHAAVLLC). Residues 192–211 (LVVFFLAMLVLMAVLYVHML) form a helical membrane-spanning segment. Topologically, residues 212–240 (ARACQHAHGIIRLHKRQTPAHQAFGLRGA) are cytoplasmic. Residues 241–266 (ATLTILLGIFFLCWGPFFLHLTLVVF) traverse the membrane as a helical segment. The Extracellular segment spans residues 267–279 (CPQHLTCSCIFKN). Residues 280–300 (FKVFLTLIICNTIIDPLIYAF) traverse the membrane as a helical segment. Residues 301 to 316 (RSQELRRTLKEVLCSW) lie on the Cytoplasmic side of the membrane. Residue C314 is the site of S-palmitoyl cysteine attachment.

The protein belongs to the G-protein coupled receptor 1 family. In terms of assembly, interacts with MGRN1, but does not undergo MGRN1-mediated ubiquitination; this interaction competes with GNAS-binding and thus inhibits agonist-induced cAMP production. Interacts with OPN3; the interaction results in a decrease in MC1R-mediated cAMP signaling and ultimately a decrease in melanin production in melanocytes.

Its subcellular location is the cell membrane. Receptor for MSH (alpha, beta and gamma) and ACTH. The activity of this receptor is mediated by G proteins which activate adenylate cyclase. Mediates melanogenesis, the production of eumelanin (black/brown) and phaeomelanin (red/yellow), via regulation of cAMP signaling in melanocytes. This is Melanocyte-stimulating hormone receptor (MC1R) from Saguinus geoffroyi (Geoffroy's tamarin).